A 267-amino-acid polypeptide reads, in one-letter code: Hydroxyethylthiazole kinase 2 (267 aa).

Met41 is a substrate binding site. ATP-binding residues include Lys116 and Thr166. Substrate is bound at residue Gly193.

Belongs to the Thz kinase family. It depends on Mg(2+) as a cofactor.

The catalysed reaction is 5-(2-hydroxyethyl)-4-methylthiazole + ATP = 4-methyl-5-(2-phosphooxyethyl)-thiazole + ADP + H(+). The protein operates within cofactor biosynthesis; thiamine diphosphate biosynthesis; 4-methyl-5-(2-phosphoethyl)-thiazole from 5-(2-hydroxyethyl)-4-methylthiazole: step 1/1. Its function is as follows. Catalyzes the phosphorylation of the hydroxyl group of 4-methyl-5-beta-hydroxyethylthiazole (THZ). The protein is Hydroxyethylthiazole kinase 2 of Streptococcus pneumoniae (strain JJA).